Consider the following 316-residue polypeptide: MNTSITARELFEQQRERLGLRWAAGKSGEKRELEAGNTVSRRPSLAGYLNAIYPNKVQILGTEELSWLDALEPRQRWETIEKIMQSHPLALVLTRNQACPEDLRAAADESGTPLWLSPKRGHELLNHLSYHLARTLAPRVILHGVFMEIYSIGVLITGEAGSGKSELALELLSRGHRLVADDAPEFTQIAPDVLDGTCPELLQDLLEVRGLGVLNVREMFGDTAVKKNKYLRLIVHLTKPMTEPTPHGYERLTGDSGTRHVLDLDVPLITLPVMPGRNLAVLTEAATRLHILRTKGIDPAAMFIARHSNLLERRTP.

Active-site residues include His-143 and Lys-164. 158–165 (GEAGSGKS) provides a ligand contact to ATP. Ser-165 lines the Mg(2+) pocket. Asp-182 functions as the Proton acceptor; for phosphorylation activity. Proton donor; for dephosphorylation activity in the catalytic mechanism. Residues 206 to 215 (LEVRGLGVLN) are important for the catalytic mechanism of both phosphorylation and dephosphorylation. Glu-207 serves as a coordination point for Mg(2+). Arg-251 is an active-site residue. Positions 272–277 (PVMPGR) are important for the catalytic mechanism of dephosphorylation.

It belongs to the HPrK/P family. Homohexamer. Mg(2+) serves as cofactor.

The enzyme catalyses [HPr protein]-L-serine + ATP = [HPr protein]-O-phospho-L-serine + ADP + H(+). It carries out the reaction [HPr protein]-O-phospho-L-serine + phosphate + H(+) = [HPr protein]-L-serine + diphosphate. In terms of biological role, catalyzes the ATP- as well as the pyrophosphate-dependent phosphorylation of a specific serine residue in HPr, a phosphocarrier protein of the phosphoenolpyruvate-dependent sugar phosphotransferase system (PTS). HprK/P also catalyzes the pyrophosphate-producing, inorganic phosphate-dependent dephosphorylation (phosphorolysis) of seryl-phosphorylated HPr (P-Ser-HPr). This Stenotrophomonas maltophilia (strain K279a) protein is HPr kinase/phosphorylase.